The chain runs to 216 residues: Large ribosomal subunit protein uL3 (216 aa).

Q157 bears the N5-methylglutamine mark.

The protein belongs to the universal ribosomal protein uL3 family. Part of the 50S ribosomal subunit. Forms a cluster with proteins L14 and L19. Post-translationally, methylated by PrmB.

Functionally, one of the primary rRNA binding proteins, it binds directly near the 3'-end of the 23S rRNA, where it nucleates assembly of the 50S subunit. This chain is Large ribosomal subunit protein uL3, found in Xanthomonas axonopodis pv. citri (strain 306).